We begin with the raw amino-acid sequence, 176 residues long: Centromere protein R (176 aa).

K8 is covalently cross-linked (Glycyl lysine isopeptide (Lys-Gly) (interchain with G-Cter in SUMO2)). The residue at position 17 (S17) is a Phosphoserine. The tract at residues 20–50 (PSKIVRKKSITAYSPTTGTYQLSPFSSPATP) is DD1. K22 is covalently cross-linked (Glycyl lysine isopeptide (Lys-Gly) (interchain with G-Cter in SUMO2)). A Phosphoserine modification is found at S28. Residues 34–48 (PTTGTYQLSPFSSPA) show a composition bias toward polar residues. The interval 34 to 78 (PTTGTYQLSPFSSPATPKEQEHRNGPSNETRKRSNLSSPVRQEST) is disordered. Over residues 51-65 (KEQEHRNGPSNETRK) the composition is skewed to basic and acidic residues. A Nuclear localization signal motif is present at residues 63–66 (TRKR). S71 bears the Phosphoserine mark. Residues 82–112 (RDGFMVLLSKIEISSEKTMEIMKNLSSIQAL) are a coiled coil. An LXXIL motif motif is present at residues 171–175 (LKAIL).

In terms of assembly, homodimer; mediated by the coiled coil domain. Interacts with CCNA2 and MTA1. Interacts with NFKB1 NF-kappa-B subunit. Component of the CENPA-CAD complex, composed of CENPI, CENPK, CENPL, CENPO, CENPP, CENPQ, CENPR and CENPS. The CENPA-CAD complex interacts with the CENPA-NAC complex, at least composed of CENPA, CENPC, CENPH, CENPM, CENPN, CENPT and CENPU. Interacts with TASOR. As to expression, expressed in the spermatogonia and spermatocytes.

It localises to the nucleus. The protein localises to the chromosome. The protein resides in the centromere. It is found in the kinetochore. In terms of biological role, transcription coregulator that can have both coactivator and corepressor functions. Involved in the coactivation of nuclear receptors for retinoid X (RXRs) and thyroid hormone (TRs) in a ligand-dependent fashion. In contrast, it does not coactivate nuclear receptors for retinoic acid, vitamin D, progesterone receptor, nor glucocorticoid. Acts as a coactivator for estrogen receptor alpha. Acts as a transcriptional corepressor via its interaction with the NFKB1 NF-kappa-B subunit, possibly by interfering with the transactivation domain of NFKB1. Induces apoptosis in breast cancer cells, but not in other cancer cells, via a caspase-2 mediated pathway that involves mitochondrial membrane permeabilization but does not require other caspases. May also act as an inhibitor of cyclin A-associated kinase. Also acts a component of the CENPA-CAD (nucleosome distal) complex, a complex recruited to centromeres which is involved in assembly of kinetochore proteins, mitotic progression and chromosome segregation. May be involved in incorporation of newly synthesized CENPA into centromeres via its interaction with the CENPA-NAC complex. In Mus musculus (Mouse), this protein is Centromere protein R (Itgb3bp).